We begin with the raw amino-acid sequence, 457 residues long: Peptidyl-prolyl cis-trans isomerase FKBP5 (457 aa).

An N-acetylmethionine modification is found at M1. Residues 1-11 (MTTDEGAKSSR) show a composition bias toward basic and acidic residues. Residues 1-28 (MTTDEGAKSSRENPAATVAEQGEDVTSK) are disordered. K28 carries the N6-acetyllysine modification. 2 PPIase FKBP-type domains span residues 50–138 (GDKV…LNFK) and 165–251 (GARV…KSFE). 3 TPR repeats span residues 268–301 (AAIV…LEME), 317–350 (LAAF…DSAN), and 351–384 (EKGL…NPQN). The interval 424–457 (EANKAVSKKTSEGVTNEKLTVSHAVEEEKPEGHV) is disordered. A Phosphoserine modification is found at S445. Over residues 447–457 (AVEEEKPEGHV) the composition is skewed to basic and acidic residues.

Part of a heteromultimeric cytoplasmic complex with HSP90AA1, HSPA1A/HSPA1B and steroid receptors. Upon ligand binding dissociates from the complex and FKBP4 takes its place. Interacts with functionally mature heterooligomeric progesterone receptor complexes along with HSP90 and TEBP. Interacts with NR3C1. Interacts with Akt/AKT1 and PHLPP1; enhancing dephosphorylation and subsequent activation of Akt/AKT1. Interacts with IFI44L; this interaction modulates the kinase activity of IKBKB and IKBKE. Interacts with IKBKB and IKBKE. In terms of processing, acetylation impairs ability to promote interaction between Akt/AKT1 and PHLPP1. Deacetylation by SIRT7 promotes interaction between Akt/AKT1 and PHLPP1, leading to suppress Akt/AKT1 activation. Post-translationally, ubiquitinated, leading to degradation in a proteasome-dependent manner. Deubiquitinated by USP49, leading to stabilization.

The protein resides in the cytoplasm. It is found in the nucleus. The catalysed reaction is [protein]-peptidylproline (omega=180) = [protein]-peptidylproline (omega=0). Its activity is regulated as follows. Inhibited by both FK506 and rapamycin. Immunophilin protein with PPIase and co-chaperone activities. Component of unligated steroid receptors heterocomplexes through interaction with heat-shock protein 90 (HSP90). Plays a role in the intracellular trafficking of heterooligomeric forms of steroid hormone receptors maintaining the complex into the cytoplasm when unliganded. Acts as a regulator of Akt/AKT1 activity by promoting the interaction between Akt/AKT1 and PHLPP1, thereby enhancing dephosphorylation and subsequent activation of Akt/AKT1. Interacts with IKBKE and IKBKB which facilitates IKK complex assembly leading to increased IKBKE and IKBKB kinase activity, NF-kappaB activation, and IFN production. The chain is Peptidyl-prolyl cis-trans isomerase FKBP5 (FKBP5) from Saguinus oedipus (Cotton-top tamarin).